Consider the following 87-residue polypeptide: Cell division topological specificity factor (87 aa).

Belongs to the MinE family.

Its function is as follows. Prevents the cell division inhibition by proteins MinC and MinD at internal division sites while permitting inhibition at polar sites. This ensures cell division at the proper site by restricting the formation of a division septum at the midpoint of the long axis of the cell. The polypeptide is Cell division topological specificity factor (Blochmanniella pennsylvanica (strain BPEN)).